A 396-amino-acid chain; its full sequence is S-adenosylmethionine synthase (396 aa).

Position 16 (His16) interacts with ATP. Residue Asp18 participates in Mg(2+) binding. Glu44 provides a ligand contact to K(+). L-methionine-binding residues include Glu57 and Gln100. The segment at 100–110 (QSQDIARGVDN) is flexible loop. Residues 162-164 (DGK), 228-229 (RF), Asp237, 243-244 (RK), Ala260, and Lys264 each bind ATP. An L-methionine-binding site is contributed by Asp237. Residue Lys268 participates in L-methionine binding.

This sequence belongs to the AdoMet synthase family. Homotetramer; dimer of dimers. The cofactor is Mg(2+). It depends on K(+) as a cofactor.

The protein resides in the cytoplasm. The enzyme catalyses L-methionine + ATP + H2O = S-adenosyl-L-methionine + phosphate + diphosphate. The protein operates within amino-acid biosynthesis; S-adenosyl-L-methionine biosynthesis; S-adenosyl-L-methionine from L-methionine: step 1/1. Catalyzes the formation of S-adenosylmethionine (AdoMet) from methionine and ATP. The overall synthetic reaction is composed of two sequential steps, AdoMet formation and the subsequent tripolyphosphate hydrolysis which occurs prior to release of AdoMet from the enzyme. This chain is S-adenosylmethionine synthase, found in Myxococcus xanthus (strain DK1622).